The primary structure comprises 278 residues: Large ribosomal subunit protein uL2 (278 aa).

The tract at residues 222–278 is disordered; sequence GVVMNPIDHPHGGGEGRTSGGRHPVTPWGKPTKGKKTRSNKSTDKFILISRHKRKKK.

The protein belongs to the universal ribosomal protein uL2 family. In terms of assembly, part of the 50S ribosomal subunit. Forms a bridge to the 30S subunit in the 70S ribosome.

In terms of biological role, one of the primary rRNA binding proteins. Required for association of the 30S and 50S subunits to form the 70S ribosome, for tRNA binding and peptide bond formation. It has been suggested to have peptidyltransferase activity; this is somewhat controversial. Makes several contacts with the 16S rRNA in the 70S ribosome. The chain is Large ribosomal subunit protein uL2 from Rhodopseudomonas palustris (strain BisB5).